Reading from the N-terminus, the 88-residue chain is UPF0335 protein MexAM1_META1p2947 (88 aa).

This sequence belongs to the UPF0335 family.

This Methylorubrum extorquens (strain ATCC 14718 / DSM 1338 / JCM 2805 / NCIMB 9133 / AM1) (Methylobacterium extorquens) protein is UPF0335 protein MexAM1_META1p2947.